The primary structure comprises 513 residues: Zinc finger protein RFP (513 aa).

The RING-type zinc-finger motif lies at 16-57; that stretch reads CPVCLQYFAEPMMLDCGHNICCACLARCWGTAETNVSCPQCR. Zn(2+) contacts are provided by C96, H99, C118, and H124. The B box-type zinc-finger motif lies at 96-127; sequence CEKHREPLKLYCEEDQMPICVVCDRSREHRGH. 2 coiled-coil regions span residues 132 to 172 and 282 to 311; these read LEEA…AELL and QKCLFLTESLKQFTEKMQSDMEKIQELREA. Positions 298-492 constitute a B30.2/SPRY domain; that stretch reads MQSDMEKIQE…SAAPLIICPM (195 aa).

Belongs to the TRIM/RBCC family. As to quaternary structure, homomultimerizes. Part of a complex consisting of TRIM27, USP7 and MAGEL2; directly interacts with USP7. Interacts with PML, EIF3S6, EPC1, CHD4 and EID1. Interacts with MAGED4, MAGEF1 and MAGEL2. Interacts with PTPN11. Interacts with autophagy receptor p62/SQSTM1. In terms of assembly, (Microbial infection) Interacts with M.tuberculosis PtpA, whick blocks TRIM27-promoted JNK/p38 MAPK pathway activation and cell apoptosis. (Microbial infection) Interacts with herpes simplex virus protein ICP0. As to expression, expressed in testis namely within the seminiferous tubules.

It localises to the nucleus. The protein resides in the cytoplasm. Its subcellular location is the PML body. The protein localises to the early endosome. It is found in the mitochondrion. The catalysed reaction is S-ubiquitinyl-[E2 ubiquitin-conjugating enzyme]-L-cysteine + [acceptor protein]-L-lysine = [E2 ubiquitin-conjugating enzyme]-L-cysteine + N(6)-ubiquitinyl-[acceptor protein]-L-lysine.. It participates in protein modification; protein ubiquitination. Functionally, E3 ubiquitin-protein ligase that mediates ubiquitination of various substrates and thereby plays a role in diffent processes including proliferation, innate immunity, apoptosis, immune response or autophagy. Ubiquitinates PIK3C2B and inhibits its activity by mediating the formation of 'Lys-48'-linked polyubiquitin chains; the function inhibits CD4 T-cell activation. Acts as a regulator of retrograde transport: together with MAGEL2, mediates the formation of 'Lys-63'-linked polyubiquitin chains at 'Lys-220' of WASHC1, leading to promote endosomal F-actin assembly. Has a transcriptional repressor activity by cooperating with EPC1. Induces apoptosis by activating Jun N-terminal kinase and p38 kinase and also increases caspase-3-like activity independently of mitochondrial events. May function in male germ cell development. Has DNA-binding activity and preferentially bound to double-stranded DNA. Forms a complex with and ubiquitinates the ubiquitin-specific protease USP7, which in turn deubiquitinates RIPK1 resulting in the positive regulation of TNF-alpha-induced apoptosis. In addition, acts with USP7 or PTPN11 as an inhibitor of the antiviral signaling pathway by promoting kinase TBK1 ubiquitination and degradation. Acts as a negative regulator of NOD2 signaling by mediating ubiquitination of NOD2, promoting its degradation by the proteasome. Alternatively, facilitates mitophagy via stabilization of active TBK1. Negatively regulates autophagy flux under basal conditions by directly polyubiquitinating ULK1. During starvation-induced autophagy, catalyzes non-degradative ubiquitination of the kinase STK38L promoting its activation and phosphorylation of ULK1 leading to its ubiquitination and degradation to restrain the amplitude and duration of autophagy. (Microbial infection) Positively regulates hepatitis C virus replication by suppressing type I IFN response during infection. The polypeptide is Zinc finger protein RFP (Homo sapiens (Human)).